Reading from the N-terminus, the 346-residue chain is DNA-directed RNA polymerase subunit alpha (346 aa).

Residues 1–242 (MLIQDGDKLI…DQLSVFINFD (242 aa)) form an alpha N-terminal domain (alpha-NTD) region. Residues 258-346 (LNPNLFKSID…WLKRKEKNEA (89 aa)) form an alpha C-terminal domain (alpha-CTD) region.

The protein belongs to the RNA polymerase alpha chain family. In terms of assembly, homodimer. The RNAP catalytic core consists of 2 alpha, 1 beta, 1 beta' and 1 omega subunit. When a sigma factor is associated with the core the holoenzyme is formed, which can initiate transcription.

It carries out the reaction RNA(n) + a ribonucleoside 5'-triphosphate = RNA(n+1) + diphosphate. Its function is as follows. DNA-dependent RNA polymerase catalyzes the transcription of DNA into RNA using the four ribonucleoside triphosphates as substrates. In Maridesulfovibrio salexigens (strain ATCC 14822 / DSM 2638 / NCIMB 8403 / VKM B-1763) (Desulfovibrio salexigens), this protein is DNA-directed RNA polymerase subunit alpha.